The sequence spans 371 residues: Protein-glutamate methylesterase/protein-glutamine glutaminase 3 (371 aa).

A Response regulatory domain is found at 5-120; that stretch reads RVVVIDDSAY…SEEILTIRED (116 aa). 4-aspartylphosphate is present on Asp-56. A CheB-type methylesterase domain is found at 174–362; it reads PAGRLEVVAI…LDRMSREIIQ (189 aa). Active-site residues include Ser-186, His-213, and Asp-309.

This sequence belongs to the CheB family. Post-translationally, phosphorylated by CheA. Phosphorylation of the N-terminal regulatory domain activates the methylesterase activity.

It localises to the cytoplasm. The enzyme catalyses [protein]-L-glutamate 5-O-methyl ester + H2O = L-glutamyl-[protein] + methanol + H(+). The catalysed reaction is L-glutaminyl-[protein] + H2O = L-glutamyl-[protein] + NH4(+). In terms of biological role, involved in chemotaxis. Part of a chemotaxis signal transduction system that modulates chemotaxis in response to various stimuli. Catalyzes the demethylation of specific methylglutamate residues introduced into the chemoreceptors (methyl-accepting chemotaxis proteins or MCP) by CheR. Also mediates the irreversible deamidation of specific glutamine residues to glutamic acid. In Geobacter sulfurreducens (strain ATCC 51573 / DSM 12127 / PCA), this protein is Protein-glutamate methylesterase/protein-glutamine glutaminase 3.